Consider the following 242-residue polypeptide: tRNA (guanine-N(1)-)-methyltransferase (242 aa).

Residues glycine 108 and 127–132 (IGDYVL) each bind S-adenosyl-L-methionine.

It belongs to the RNA methyltransferase TrmD family. In terms of assembly, homodimer.

It is found in the cytoplasm. It carries out the reaction guanosine(37) in tRNA + S-adenosyl-L-methionine = N(1)-methylguanosine(37) in tRNA + S-adenosyl-L-homocysteine + H(+). Specifically methylates guanosine-37 in various tRNAs. This is tRNA (guanine-N(1)-)-methyltransferase from Lactobacillus acidophilus (strain ATCC 700396 / NCK56 / N2 / NCFM).